We begin with the raw amino-acid sequence, 611 residues long: MNKIRFLDKYLVQKIAAGESIDRPCSILRELLDNSIDSGATKIEVFLEEGGIHKILIIDNGIGIGKEDLKICYLPHTTSKISSEEDLRKIETLGFRGEALSSIAICSNISITSSTTGNESYQIEVENGIEKCFKKQPAINGTIVNVTKIFHNFPARKRFLKQEPIETKMCLKVLEEKIITHPEINFEINLNQKLRKIYFKESLIDRVQNVYGNVIENNKFKVLKKEHENIKIELFLAPANFSKKSKRHIKTFVNRRPIDQKDLLEAITNGHSRIISPGNFPICYLFLEINPEYIDFNVHPQKKEVRFFNLPFLFKLISDNINNFFDKDINSYNEIVIKRQLTDDDNLIEMINQPKNLNKTNTYDIIQNKNLETEHTVNDLSKNIIQNDIGLRRYNSIIQNRPSFKENITNIFSDKFLEFEEPPNKNEKEEIKFNYIGQIFSEFLIVEKVNEIYFIDQHAVHEKIIYEKLRNSKKTVQKLLIPIEFTIVDKNIEEIIDSEIEEYKKMDIIISKIGPKKYQLESIPNICNQYENTLINFFQSRKSRTINSLESDLYANIACRKAVKTNDILSLEFSKFLIDEFFKLEIKHCPHGRKIYYKISKFELEKKVARA.

Belongs to the DNA mismatch repair MutL/HexB family.

Functionally, this protein is involved in the repair of mismatches in DNA. It is required for dam-dependent methyl-directed DNA mismatch repair. May act as a 'molecular matchmaker', a protein that promotes the formation of a stable complex between two or more DNA-binding proteins in an ATP-dependent manner without itself being part of a final effector complex. The protein is DNA mismatch repair protein MutL of Borrelia garinii subsp. bavariensis (strain ATCC BAA-2496 / DSM 23469 / PBi) (Borreliella bavariensis).